The primary structure comprises 889 residues: Disease resistance protein UNI (889 aa).

The stretch at 19–64 (NCLIGKSYIRTLEKNLRALQREMEDLRAIQHEVQNKVARDEARHQR) forms a coiled coil. The interval 131 to 152 (GNFDEVSQPPPRSEVEERPTQP) is disordered. One can recognise an NB-ARC domain in the interval 137–440 (SQPPPRSEVE…CEGFIGEDQV (304 aa)). 179–186 (GMGGVGKT) is a binding site for ATP. 9 LRR repeats span residues 510 to 532 (WGAV…ESKC), 533 to 555 (SELT…FIRY), 557 to 580 (QKLV…ISGL), 581 to 603 (VSLQ…LKEL), 604 to 625 (KKLT…GISR), 626 to 652 (LLSL…LQQL), 653 to 676 (QNLQ…LAKL), 698 to 721 (MENL…ESET), and 825 to 848 (CPKL…EIHM).

This sequence belongs to the disease resistance NB-LRR family. In terms of assembly, interacts with RPT2A.

Its function is as follows. Involved in disease resistance via the salicylic acid (SA) signaling pathway. Involved in shoot architecture development via the cytokinin signaling pathway. This is Disease resistance protein UNI from Arabidopsis thaliana (Mouse-ear cress).